A 647-amino-acid polypeptide reads, in one-letter code: Protein arginine N-methyltransferase 7 (647 aa).

2 consecutive SAM-dependent MTase PRMT-type domains span residues 12-332 (EREW…FSLW) and 337-647 (GKDK…SEDS). Active-site residues include Glu-140 and Glu-149.

It belongs to the class I-like SAM-binding methyltransferase superfamily. Protein arginine N-methyltransferase family. PRMT7 subfamily.

Arginine methyltransferase that can both catalyze the formation of omega-N monomethylarginine (MMA) and symmetrical dimethylarginine (sDMA). This Caenorhabditis elegans protein is Protein arginine N-methyltransferase 7 (prmt-7).